Consider the following 544-residue polypeptide: Zinc finger and SCAN domain-containing protein 25 (544 aa).

Glycyl lysine isopeptide (Lys-Gly) (interchain with G-Cter in SUMO2) cross-links involve residues Lys-3 and Lys-22. The region spanning 42 to 124 is the SCAN box domain; it reads RLRFRQFRYQ…AMVEDLTERA (83 aa). Lys-128 participates in a covalent cross-link: Glycyl lysine isopeptide (Lys-Gly) (interchain with G-Cter in SUMO2). The interval 157 to 189 is disordered; the sequence is VEVKPEWGMPPGEGVQGPDPGTEEQLSQDPGDE. Glycyl lysine isopeptide (Lys-Gly) (interchain with G-Cter in SUMO2) cross-links involve residues Lys-278 and Lys-285. 6 C2H2-type zinc fingers span residues 348-370, 375-397, 403-425, 431-453, 459-480, and 486-508; these read FQCP…QRTH, YGCV…QRTH, YVCS…QRSH, YKCG…RRTH, YTCE…RRAH, and YGCQ…QRIH. Residues 514 to 536 form a C2H2-type 7; degenerate zinc finger; that stretch reads YHCPACGRSFNQRSILNRHQKTQ.

This sequence belongs to the krueppel C2H2-type zinc-finger protein family.

The protein localises to the nucleus. Its function is as follows. May be involved in transcriptional regulation. The sequence is that of Zinc finger and SCAN domain-containing protein 25 (ZSCAN25) from Homo sapiens (Human).